Reading from the N-terminus, the 156-residue chain is Toxin Res (156 aa).

This sequence belongs to the MbcT/ParT/Res family. As to quaternary structure, homodimer. Forms a complex with cognate antitoxin Xre.

Its function is as follows. Toxic component of a type II toxin-antitoxin (TA) system. Expression in E.coli inhibits cell growth; bacteriostasis is neutralized by expression of cognate antitoxin Xre. Expression in E.coli leads to almost complete depletion of intracellular NAD(+): NAD(+) levels are partially restored when coexpressed with antitoxin Xre. This is Toxin Res from Photorhabdus laumondii subsp. laumondii (strain DSM 15139 / CIP 105565 / TT01) (Photorhabdus luminescens subsp. laumondii).